Consider the following 292-residue polypeptide: 4-hydroxy-tetrahydrodipicolinate synthase (292 aa).

Residue T45 coordinates pyruvate. The Proton donor/acceptor role is filled by Y133. The active-site Schiff-base intermediate with substrate is the K161. I203 contacts pyruvate.

It belongs to the DapA family. In terms of assembly, homotetramer; dimer of dimers.

It localises to the cytoplasm. It catalyses the reaction L-aspartate 4-semialdehyde + pyruvate = (2S,4S)-4-hydroxy-2,3,4,5-tetrahydrodipicolinate + H2O + H(+). It participates in amino-acid biosynthesis; L-lysine biosynthesis via DAP pathway; (S)-tetrahydrodipicolinate from L-aspartate: step 3/4. In terms of biological role, catalyzes the condensation of (S)-aspartate-beta-semialdehyde [(S)-ASA] and pyruvate to 4-hydroxy-tetrahydrodipicolinate (HTPA). This chain is 4-hydroxy-tetrahydrodipicolinate synthase, found in Vibrio vulnificus (strain CMCP6).